Reading from the N-terminus, the 198-residue chain is Probable molybdenum cofactor guanylyltransferase (198 aa).

Residues leucine 11 to glycine 13, lysine 23, aspartate 71, and aspartate 102 contribute to the GTP site. Position 102 (aspartate 102) interacts with Mg(2+).

The protein belongs to the MobA family. It depends on Mg(2+) as a cofactor.

It localises to the cytoplasm. The enzyme catalyses Mo-molybdopterin + GTP + H(+) = Mo-molybdopterin guanine dinucleotide + diphosphate. In terms of biological role, transfers a GMP moiety from GTP to Mo-molybdopterin (Mo-MPT) cofactor (Moco or molybdenum cofactor) to form Mo-molybdopterin guanine dinucleotide (Mo-MGD) cofactor. In Halalkalibacterium halodurans (strain ATCC BAA-125 / DSM 18197 / FERM 7344 / JCM 9153 / C-125) (Bacillus halodurans), this protein is Probable molybdenum cofactor guanylyltransferase.